The sequence spans 376 residues: dTDP-4-amino-4,6-dideoxygalactose transaminase (376 aa).

The residue at position 181 (Lys-181) is an N6-(pyridoxal phosphate)lysine.

Belongs to the DegT/DnrJ/EryC1 family. Homotetramer. The cofactor is pyridoxal 5'-phosphate.

The enzyme catalyses dTDP-4-amino-4,6-dideoxy-alpha-D-galactose + 2-oxoglutarate = dTDP-4-dehydro-6-deoxy-alpha-D-glucose + L-glutamate. It participates in bacterial outer membrane biogenesis; enterobacterial common antigen biosynthesis. Catalyzes the synthesis of dTDP-4-amino-4,6-dideoxy-D-galactose (dTDP-Fuc4N) from dTDP-4-keto-6-deoxy-D-glucose (dTDP-D-Glc4O) and L-glutamate. The polypeptide is dTDP-4-amino-4,6-dideoxygalactose transaminase (Escherichia coli (strain K12)).